The primary structure comprises 136 residues: MRTKILHIKGKVTAGLGEGRIFLSIPYYIESFKKYLGFEPYAGTLNIVIYDRISLENRLILDLAKGIIIPEHKEPNRVLGSVKAFPSSINSISPAAIVIPARTTHPKSVIEIISPYYLREKLSLKDGDEVEIEVYL.

15-20 (GLGEGR) is a CDP binding site. Mg(2+) is bound by residues Thr44 and Asn46. Residues Thr103 and Glu111 each contribute to the FMN site. 116–119 (YYLR) contributes to the CDP binding site.

This sequence belongs to the archaeal riboflavin kinase family. Mg(2+) is required as a cofactor.

The enzyme catalyses riboflavin + CTP = CDP + FMN + H(+). Its pathway is cofactor biosynthesis; FMN biosynthesis; FMN from riboflavin (CTP route): step 1/1. Catalyzes the CTP-dependent phosphorylation of riboflavin (vitamin B2) to form flavin mononucleotide (FMN). The polypeptide is Riboflavin kinase (Sulfurisphaera tokodaii (strain DSM 16993 / JCM 10545 / NBRC 100140 / 7) (Sulfolobus tokodaii)).